Consider the following 370-residue polypeptide: Chaperone protein DnaJ (370 aa).

Positions 6 to 70 (DYYEVLGVQR…EKRSMYDRFG (65 aa)) constitute a J domain. The CR-type zinc-finger motif lies at 128–208 (GVEKTIEFRR…CRGEGRVRQT (81 aa)). Cys141, Cys144, Cys158, Cys161, Cys182, Cys185, Cys196, and Cys199 together coordinate Zn(2+). 4 CXXCXGXG motif repeats span residues 141 to 148 (CPACRGSG), 158 to 165 (CPKCGGLG), 182 to 189 (CDMCRGEG), and 196 to 203 (CRECRGEG).

It belongs to the DnaJ family. In terms of assembly, homodimer. It depends on Zn(2+) as a cofactor.

It is found in the cytoplasm. Functionally, participates actively in the response to hyperosmotic and heat shock by preventing the aggregation of stress-denatured proteins and by disaggregating proteins, also in an autonomous, DnaK-independent fashion. Unfolded proteins bind initially to DnaJ; upon interaction with the DnaJ-bound protein, DnaK hydrolyzes its bound ATP, resulting in the formation of a stable complex. GrpE releases ADP from DnaK; ATP binding to DnaK triggers the release of the substrate protein, thus completing the reaction cycle. Several rounds of ATP-dependent interactions between DnaJ, DnaK and GrpE are required for fully efficient folding. Also involved, together with DnaK and GrpE, in the DNA replication of plasmids through activation of initiation proteins. In Roseiflexus sp. (strain RS-1), this protein is Chaperone protein DnaJ.